We begin with the raw amino-acid sequence, 297 residues long: Phosphoribosylaminoimidazole-succinocarboxamide synthase (297 aa).

This sequence belongs to the SAICAR synthetase family.

The catalysed reaction is 5-amino-1-(5-phospho-D-ribosyl)imidazole-4-carboxylate + L-aspartate + ATP = (2S)-2-[5-amino-1-(5-phospho-beta-D-ribosyl)imidazole-4-carboxamido]succinate + ADP + phosphate + 2 H(+). The protein operates within purine metabolism; IMP biosynthesis via de novo pathway; 5-amino-1-(5-phospho-D-ribosyl)imidazole-4-carboxamide from 5-amino-1-(5-phospho-D-ribosyl)imidazole-4-carboxylate: step 1/2. The chain is Phosphoribosylaminoimidazole-succinocarboxamide synthase from Mycobacterium marinum (strain ATCC BAA-535 / M).